The primary structure comprises 655 residues: Forkhead box protein O1 (655 aa).

Disordered regions lie at residues 1–63 (MAEA…SASA) and 116–158 (GCLH…SRRN). Position 24 is a phosphothreonine; by PKB/AKT1 or PKB/AKT2 and SGK1 (Thr24). Residues 33–63 (SQSNSATSSPAPSGSAAANPDAAAGLPSASA) are compositionally biased toward low complexity. Residues 120-141 (PAPPQPPPPGPLSQHPPVPPAA) show a composition bias toward pro residues. Positions 159 to 235 (AWGNLSYADL…VQNEGTGKSS (77 aa)) form a DNA-binding region, fork-head. DNA-binding regions lie at residues 211–218 (NSIRHNLS) and 234–237 (SSWW). Phosphoserine; by STK4/MST1 is present on residues Ser212, Ser218, Ser234, and Ser235. Residues 234 to 344 (SSWWMLNPEG…QDDLGEGDVH (111 aa)) are disordered. Residues Lys245 and Lys248 each carry the N6-acetyllysine modification. Ser249 is modified (phosphoserine; by CDK1). Omega-N-methylarginine; by PRMT1 is present on residues Arg251 and Arg253. The Nuclear localization signal signature appears at 251–253 (RRR). Ser256 is subject to Phosphoserine; by PKB/AKT1 and SGK1. 3 positions are modified to N6-acetyllysine: Lys262, Lys265, and Lys274. Basic residues predominate over residues 264–275 (AKSRSRAAKKKA). Positions 283–563 (GAGDSPGSQF…RLTQVKTPVQ (281 aa)) are sufficient for interaction with NLK. Phosphoserine is present on residues Ser287 and Ser298. Polar residues predominate over residues 309–326 (NWSTFRPRTSSNASTISG). Ser319 is subject to Phosphoserine; by PKB/AKT1. Phosphoserine; by CK1 and SGK1 is present on Ser322. At Ser325 the chain carries Phosphoserine; by CK1. Residue Ser329 is modified to Phosphoserine; by DYRK1A. Thr333 is modified (phosphothreonine). The required for interaction with RUNX2 stretch occupies residues 363-459 (SEISNPENME…GGMSQYNCAP (97 aa)). An N6-acetyllysine modification is found at Lys423. Residues 462–466 (LKELL) carry the Required for interaction with SIRT1 motif. Positions 507–534 (YGSQASHNKMMNPSSHTHPGHAQQTSAV) are enriched in polar residues. The interval 507 to 537 (YGSQASHNKMMNPSSHTHPGHAQQTSAVNGR) is disordered.

In terms of assembly, interacts with LRPPRC. Interacts with RUNX2; the interaction inhibits RUNX2 transcriptional activity and mediates the IGF1/insulin-dependent BGLAP expression in osteoblasts Interacts with PPP2R1A; the interaction regulates the dephosphorylation of FOXO1 at Thr-24 and Ser-256 leading to its nuclear import. Interacts (acetylated form) with PPARG. Interacts with XBP1 isoform 2; this interaction is direct and leads to FOXO1 ubiquitination and degradation via the proteasome pathway. Interacts with NLK. Interacts with SIRT1; the interaction results in the deacetylation of FOXO1 leading to activation of FOXO1-mediated transcription of genes involved in DNA repair and stress resistance. Binds to CDK1. Interacts with the 14-3-3 proteins, YWHAG and YWHAZ; the interactions require insulin-stimulated phosphorylation on Thr-24, promote nuclear exit and loss of transcriptional activity. Interacts with SKP2; the interaction ubiquitinates FOXO1 leading to its proteasomal degradation. The interaction requires the presence of KRIT1. Interacts (via the C-terminal half) with ATF4 (via its DNA-binding domain); the interaction occurs in osteoblasts, regulates glucose homeostasis via suppression of beta-cell proliferation and subsequent decrease in insulin production. Interacts with PRMT1; the interaction methylates FOXO1, prevents PKB/AKT1 phosphorylation and retains FOXO1 in the nucleus. Interacts with EP300 and CREBBP; the interactions acetylate FOXO1. Interacts with SIRT2; the interaction is disrupted in response to oxidative stress or serum deprivation, leading to increased level of acetylated FOXO1, which promotes stress-induced autophagy by stimulating E1-like activating enzyme ATG7. Interacts (acetylated form) with ATG7; the interaction is increased in response to oxidative stress or serum deprivation and promotes the autophagic process leading to cell death. Interacts (via the Fork-head domain) with CEBPA; the interaction increases when FOXO1 is deacetylated. Interacts with WDFY2. Forms a complex with WDFY2 and AKT1. Interacts with CRY1. Interacts with PPIA/CYPA; the interaction promotes FOXO1 dephosphorylation, nuclear accumulation and transcriptional activity. Interacts with TOX4; FOXO1 is required for full induction of TOX4-dependent activity and the interaction is inhibited by insulin. Interacts (when phosphorylated on Ser-256) with STUB1/CHIP. In terms of processing, phosphorylation by NLK promotes nuclear export and inhibits the transcriptional activity. In response to growth factors, phosphorylation on Thr-24, Ser-256 and Ser-322 by PKB/AKT1 promotes nuclear export and inactivation of transactivational activity. Phosphorylation on Thr-24 is required for binding 14-3-3 proteins. Phosphorylation of Ser-256 decreases DNA-binding activity and promotes the phosphorylation of Thr-24 and Ser-319, permitting phosphorylation of Ser-322 and Ser-325, probably by CDK1, leading to nuclear exclusion and loss of function. Stress signals, such as response to oxygen or nitric oxide, attenuate the PKB/AKT1-mediated phosphorylation leading to nuclear retention. Phosphorylation of Ser-329 is independent of IGF1 and leads to reduced function. Dephosphorylated on Thr-24 and Ser-256 by PP2A in beta-cells under oxidative stress leading to nuclear retention. Phosphorylation of Ser-249 by CDK1 disrupts binding of 14-3-3 proteins leading to nuclear accumulation and has no effect on DNA-binding nor transcriptional activity. Phosphorylation by STK4/MST1 on Ser-212, upon oxidative stress, inhibits binding to 14-3-3 proteins and nuclear export. PPIA/CYPA promotes its dephosphorylation on Ser-256. Post-translationally, ubiquitinated by SKP2. Ubiquitination leads to proteasomal degradation. Ubiquitinated by STUB1/CHIP; when Ser-256 is phosphorylated. Methylation inhibits AKT1-mediated phosphorylation at Ser-256 and is increased by oxidative stress. In terms of processing, acetylated. Acetylation at Lys-262, Lys-265 and Lys-274 are necessary for autophagic cell death induction. Deacetylated by SIRT2 in response to oxidative stress or serum deprivation, thereby negatively regulating FOXO1-mediated autophagic cell death. Once in the nucleus, acetylated by CREBBP/EP300. Acetylation diminishes the interaction with target DNA and attenuates the transcriptional activity. It increases the phosphorylation at Ser-256. Deacetylation by SIRT1 results in reactivation of the transcriptional activity. Oxidative stress by hydrogen peroxide treatment appears to promote deacetylation and uncoupling of insulin-induced phosphorylation. By contrast, resveratrol acts independently of acetylation. Acetylated at Lys-423, promoting its localization to the nucleus and transcription factor activity. Deacetylation at Lys-423 by SIRT6, promotes its translocation into the cytoplasm, preventing its transcription factor activity. Deacetylation and subsequent inhibition by SIRT6 has different effects depending on cell types: it inhibits gluconeogenesis in hepatocytes, promotes glucose sensing in pancreatic beta-cells and regulates lipid catabolism in brown adipocytes. As to expression, expressed in umbilical endothelial cells (at protein level). Abundantly expressed in skeletal muscle and ovary, with lower expression in the heart, placenta, lung, liver, pancreas, spleen, testis and small intestine. Weakly expressed in the brain, thymus, prostate and mucosal lining of the colon.

Its subcellular location is the cytoplasm. It is found in the nucleus. In terms of biological role, transcription factor that is the main target of insulin signaling and regulates metabolic homeostasis in response to oxidative stress. Binds to the insulin response element (IRE) with consensus sequence 5'-TT[G/A]TTTTG-3' and the related Daf-16 family binding element (DBE) with consensus sequence 5'-TT[G/A]TTTAC-3'. Activity suppressed by insulin. Main regulator of redox balance and osteoblast numbers and controls bone mass. Orchestrates the endocrine function of the skeleton in regulating glucose metabolism. Also acts as a key regulator of chondrogenic commitment of skeletal progenitor cells in response to lipid availability: when lipids levels are low, translocates to the nucleus and promotes expression of SOX9, which induces chondrogenic commitment and suppresses fatty acid oxidation. Acts synergistically with ATF4 to suppress osteocalcin/BGLAP activity, increasing glucose levels and triggering glucose intolerance and insulin insensitivity. Also suppresses the transcriptional activity of RUNX2, an upstream activator of osteocalcin/BGLAP. Acts as an inhibitor of glucose sensing in pancreatic beta cells by acting as a transcription repressor and suppressing expression of PDX1. In hepatocytes, promotes gluconeogenesis by acting together with PPARGC1A and CEBPA to activate the expression of genes such as IGFBP1, G6PC1 and PCK1. Also promotes gluconeogenesis by directly promoting expression of PPARGC1A and G6PC1. Important regulator of cell death acting downstream of CDK1, PKB/AKT1 and STK4/MST1. Promotes neural cell death. Mediates insulin action on adipose tissue. Regulates the expression of adipogenic genes such as PPARG during preadipocyte differentiation and, adipocyte size and adipose tissue-specific gene expression in response to excessive calorie intake. Regulates the transcriptional activity of GADD45A and repair of nitric oxide-damaged DNA in beta-cells. Required for the autophagic cell death induction in response to starvation or oxidative stress in a transcription-independent manner. Mediates the function of MLIP in cardiomyocytes hypertrophy and cardiac remodeling. Positive regulator of apoptosis in cardiac smooth muscle cells as a result of its transcriptional activation of pro-apoptotic genes. Regulates endothelial cell (EC) viability and apoptosis in a PPIA/CYPA-dependent manner via transcription of CCL2 and BCL2L11 which are involved in EC chemotaxis and apoptosis. The protein is Forkhead box protein O1 of Homo sapiens (Human).